Reading from the N-terminus, the 779-residue chain is Vezatin (779 aa).

Helical transmembrane passes span 139–159 (LATP…LLVM) and 162–182 (TWWI…YLVI). Positions 430-462 (VRSLQLHLKALLNEVIILEDELEKLVCTKETQE) form a coiled coil. Disordered regions lie at residues 618 to 719 (PVDP…DSLQ) and 757 to 779 (EQTF…IEEK). Polar residues predominate over residues 625-634 (ISNSEPSMNS). Over residues 638 to 649 (KVSKNDTEEESN) the composition is skewed to basic and acidic residues. Over residues 706-719 (GLTTAPPTPRDSLQ) the composition is skewed to polar residues. The span at 770–779 (EENKNEIEEK) shows a compositional bias: basic and acidic residues.

It belongs to the vezatin family. In terms of assembly, interacts with USH2A (via the cytoplasmic region); the interaction associates VEZT with the USH2 complex at the stereocilia base. Interacts with myosin MYO7A and the cadherin-catenins complex.

It is found in the cell membrane. The protein resides in the cell projection. Its subcellular location is the stereocilium membrane. It localises to the cell junction. The protein localises to the adherens junction. It is found in the nucleus. The protein resides in the cytoplasmic vesicle. Its subcellular location is the secretory vesicle. It localises to the acrosome. Plays a pivotal role in the establishment of adherens junctions and their maintenance in adult life. Required for morphogenesis of the preimplantation embryo, and for the implantation process. In terms of biological role, (Microbial infection) In case of Listeria infection, promotes bacterial internalization by participating in myosin VIIa recruitment to the entry site. In Homo sapiens (Human), this protein is Vezatin (VEZT).